The sequence spans 343 residues: Small ribosomal subunit biogenesis GTPase RsgA (343 aa).

The CP-type G domain occupies 116 to 275 (RGQLKPVAAN…LIDSPGIREF (160 aa)). GTP is bound by residues 163–166 (NKFD) and 217–225 (GQSGVGKSS). Residues Cys-299, Cys-304, His-306, and Cys-312 each contribute to the Zn(2+) site.

The protein belongs to the TRAFAC class YlqF/YawG GTPase family. RsgA subfamily. As to quaternary structure, monomer. Associates with 30S ribosomal subunit, binds 16S rRNA. It depends on Zn(2+) as a cofactor.

It is found in the cytoplasm. In terms of biological role, one of several proteins that assist in the late maturation steps of the functional core of the 30S ribosomal subunit. Helps release RbfA from mature subunits. May play a role in the assembly of ribosomal proteins into the subunit. Circularly permuted GTPase that catalyzes slow GTP hydrolysis, GTPase activity is stimulated by the 30S ribosomal subunit. The protein is Small ribosomal subunit biogenesis GTPase RsgA of Pseudomonas fluorescens (strain SBW25).